Here is an 884-residue protein sequence, read N- to C-terminus: Alanine--tRNA ligase (884 aa).

Zn(2+) contacts are provided by H574, H578, C675, and H679.

The protein belongs to the class-II aminoacyl-tRNA synthetase family. It depends on Zn(2+) as a cofactor.

Its subcellular location is the cytoplasm. The enzyme catalyses tRNA(Ala) + L-alanine + ATP = L-alanyl-tRNA(Ala) + AMP + diphosphate. Catalyzes the attachment of alanine to tRNA(Ala) in a two-step reaction: alanine is first activated by ATP to form Ala-AMP and then transferred to the acceptor end of tRNA(Ala). Also edits incorrectly charged Ser-tRNA(Ala) and Gly-tRNA(Ala) via its editing domain. The chain is Alanine--tRNA ligase from Ralstonia nicotianae (strain ATCC BAA-1114 / GMI1000) (Ralstonia solanacearum).